Here is a 308-residue protein sequence, read N- to C-terminus: Dioxygenase peniF (308 aa).

Positions 144 and 225 each coordinate Fe cation.

It belongs to the PhyH family. As to quaternary structure, homodimer. It depends on Fe cation as a cofactor.

In terms of biological role, dioxygenase; part of the gene cluster that mediates the biosynthesis of penifulvin A, a potent insecticidal sesquiterpene that features a [5.5.5.6]dioxafenestrane ring. The first step of the pathway is performed by the sesquiterpene cyclase peniA that generates the angular triquinane scaffold silphinene via cyclization of the linear farnesyl pyrophosphate (FPP). The cytochrome P450 monooxygenase peniB and the flavin-dependent monooxygenase peniC then catalyze a series of oxidation reactions to transform silphinene into penifulvin A. The dioxygenases peniD and peniF, as well as the acetyltransferase peniE, do not seem to be involved in the biosynthesis of penifulvin A. The sequence is that of Dioxygenase peniF from Penicillium patulum (Penicillium griseofulvum).